We begin with the raw amino-acid sequence, 242 residues long: Uridylate kinase (242 aa).

Residues 15–18 (KISG), Gly-58, and Arg-62 each bind ATP. UMP contacts are provided by residues Asp-77 and 139 to 146 (TGNPFFTT). Residues Thr-166, Tyr-172, and Asp-175 each coordinate ATP.

It belongs to the UMP kinase family. As to quaternary structure, homohexamer.

The protein localises to the cytoplasm. It catalyses the reaction UMP + ATP = UDP + ADP. It participates in pyrimidine metabolism; CTP biosynthesis via de novo pathway; UDP from UMP (UMPK route): step 1/1. With respect to regulation, inhibited by UTP. In terms of biological role, catalyzes the reversible phosphorylation of UMP to UDP. The sequence is that of Uridylate kinase from Buchnera aphidicola subsp. Acyrthosiphon pisum (strain APS) (Acyrthosiphon pisum symbiotic bacterium).